The following is a 335-amino-acid chain: DNA polymerase beta (335 aa).

A Glycyl lysine isopeptide (Lys-Gly) (interchain with G-Cter in ubiquitin) cross-link involves residue K41. Residue K60 coordinates K(+). Position 60 (K60) interacts with Na(+). K61 participates in a covalent cross-link: Glycyl lysine isopeptide (Lys-Gly) (interchain with G-Cter in ubiquitin). 2 residues coordinate K(+): L62 and V65. Na(+)-binding residues include L62 and V65. K72 acts as the Nucleophile; Schiff-base intermediate with DNA; for 5'-dRP lyase activity in catalysis. Position 72 is an N6-acetyllysine (K72). A Glycyl lysine isopeptide (Lys-Gly) (interchain with G-Cter in ubiquitin) cross-link involves residue K81. At R83 the chain carries Omega-N-methylarginine; by PRMT6. K(+)-binding residues include T101, V103, and I106. Positions 101, 103, and 106 each coordinate Na(+). R149 provides a ligand contact to a 2'-deoxyribonucleoside 5'-triphosphate. R152 carries the post-translational modification Omega-N-methylarginine; by PRMT6. 4 residues coordinate a 2'-deoxyribonucleoside 5'-triphosphate: S180, R183, G189, and D190. A DNA-binding region spans residues 183-192; it reads RGAESSGDMD. Residues D190, D192, and D256 each contribute to the Mg(2+) site.

This sequence belongs to the DNA polymerase type-X family. Monomer. Binds single-stranded DNA (ssDNA). Interacts with APEX1, LIG1, LIG3, FEN1, PCNA and XRCC1. Interacts with HUWE1/ARF-BP1, STUB1/CHIP and USP47. Interacts with FAM168A. Mg(2+) serves as cofactor. Post-translationally, methylation by PRMT6 stimulates the polymerase activity by enhancing DNA binding and processivity. Ubiquitinated at Lys-41, Lys-61 and Lys-81: monoubiquitinated by HUWE1/ARF-BP1. Monoubiquitinated protein is then the target of STUB1/CHIP, which catalyzes polyubiquitination from monoubiquitin, leading to degradation by the proteasome. USP47 mediates the deubiquitination of monoubiquitinated protein, preventing polyubiquitination by STUB1/CHIP and its subsequent degradation.

It localises to the nucleus. Its subcellular location is the cytoplasm. It catalyses the reaction DNA(n) + a 2'-deoxyribonucleoside 5'-triphosphate = DNA(n+1) + diphosphate. The enzyme catalyses a 5'-end 2'-deoxyribose-2'-deoxyribonucleotide-DNA = (2E,4S)-4-hydroxypenten-2-al-5-phosphate + a 5'-end 5'-phospho-2'-deoxyribonucleoside-DNA + H(+). It carries out the reaction 2'-deoxyribonucleotide-(2'-deoxyribose 5'-phosphate)-2'-deoxyribonucleotide-DNA = a 3'-end 2'-deoxyribonucleotide-(2,3-dehydro-2,3-deoxyribose 5'-phosphate)-DNA + a 5'-end 5'-phospho-2'-deoxyribonucleoside-DNA + H(+). In terms of biological role, repair polymerase that plays a key role in base-excision repair. During this process, the damaged base is excised by specific DNA glycosylases, the DNA backbone is nicked at the abasic site by an apurinic/apyrimidic (AP) endonuclease, and POLB removes 5'-deoxyribose-phosphate from the preincised AP site acting as a 5'-deoxyribose-phosphate lyase (5'-dRP lyase); through its DNA polymerase activity, it adds one nucleotide to the 3' end of the arising single-nucleotide gap. Conducts 'gap-filling' DNA synthesis in a stepwise distributive fashion rather than in a processive fashion as for other DNA polymerases. It is also able to cleave sugar-phosphate bonds 3' to an intact AP site, acting as an AP lyase. The polypeptide is DNA polymerase beta (Polb) (Rattus norvegicus (Rat)).